A 735-amino-acid polypeptide reads, in one-letter code: Polyribonucleotide nucleotidyltransferase (735 aa).

Mg(2+)-binding residues include D515 and D521. Residues 581–641 (PKLELFSVDP…KNVDAAKDYI (61 aa)) enclose the KH domain. The disordered stretch occupies residues 649–671 (NSRGFGKKPHGHDRRDKDRQKPT). An S1 motif domain is found at 675–734 (GDEFDGVVKSVVDFGAFIELKDGVDGLLHISKIKTPLNVGDRLKVCVSEQKGNKISLSLV).

This sequence belongs to the polyribonucleotide nucleotidyltransferase family. It depends on Mg(2+) as a cofactor.

The protein localises to the cytoplasm. The enzyme catalyses RNA(n+1) + phosphate = RNA(n) + a ribonucleoside 5'-diphosphate. Involved in mRNA degradation. Catalyzes the phosphorolysis of single-stranded polyribonucleotides processively in the 3'- to 5'-direction. This is Polyribonucleotide nucleotidyltransferase from Campylobacter curvus (strain 525.92).